The sequence spans 203 residues: MSSKLRVGVAGPVGSGKTALLETLCLSLKKNYEIAVVTNDIYTKEDANFLINKKVLEEGRIIGVETGGCPHTAIREDCSLNKNAVLDLENKYNPLDFVFVESGGDNLASSFSPELVDLSIYVIDVSAGDKIPRKGGPGITRSDLLLINKIDLADMVGADLNIMKSDTEFMRKGKPWFFTNLSIGKGVKEISQFLESHLPNNQN.

11 to 18 (GPVGSGKT) contacts GTP.

Belongs to the SIMIBI class G3E GTPase family. UreG subfamily. As to quaternary structure, homodimer. UreD, UreF and UreG form a complex that acts as a GTP-hydrolysis-dependent molecular chaperone, activating the urease apoprotein by helping to assemble the nickel containing metallocenter of UreC. The UreE protein probably delivers the nickel.

It localises to the cytoplasm. In terms of biological role, facilitates the functional incorporation of the urease nickel metallocenter. This process requires GTP hydrolysis, probably effectuated by UreG. This is Urease accessory protein UreG from Prochlorococcus marinus (strain MIT 9215).